The chain runs to 116 residues: Ribosome-binding factor A (116 aa).

The protein belongs to the RbfA family. In terms of assembly, monomer. Binds 30S ribosomal subunits, but not 50S ribosomal subunits or 70S ribosomes.

It is found in the cytoplasm. Its function is as follows. One of several proteins that assist in the late maturation steps of the functional core of the 30S ribosomal subunit. Associates with free 30S ribosomal subunits (but not with 30S subunits that are part of 70S ribosomes or polysomes). Required for efficient processing of 16S rRNA. May interact with the 5'-terminal helix region of 16S rRNA. The polypeptide is Ribosome-binding factor A (Clostridium botulinum (strain Alaska E43 / Type E3)).